Reading from the N-terminus, the 318-residue chain is Lymphatic vessel endothelial hyaluronic acid receptor 1 (318 aa).

Residues 1–23 form the signal peptide; the sequence is MLQHTSLVLLLASIWTTRHPVQG. At 24–234 the chain is on the extracellular side; sequence ADLVQDLSIS…EAAGFGGVPT (211 aa). A Link domain is found at 39-129; that stretch reads GVALVGRNKN…SQKFKAYCHN (91 aa). An N-linked (GlcNAc...) asparagine glycan is attached at Asn-52. Intrachain disulfides connect Cys-60–Cys-127 and Cys-84–Cys-105. Residue Asn-129 is glycosylated (N-linked (GlcNAc...) asparagine). A helical membrane pass occupies residues 235–255; the sequence is ALLVLALLFFGAAAVLAVCYV. Residues 256–318 are Cytoplasmic-facing; it reads KRYVKAFPFT…TTVRCLEAEV (63 aa). Over residues 284-305 the composition is skewed to basic and acidic residues; the sequence is ADDVNANEESKKTIKNPEEAKS. The tract at residues 284–318 is disordered; that stretch reads ADDVNANEESKKTIKNPEEAKSPPKTTVRCLEAEV.

As to quaternary structure, homodimer; disulfide-linked. Interacts with PDGFB and IGFBP3. Forms a transient ternary complex with PDGFB and PDGFRB in TGN. In terms of processing, O-glycosylated.

It localises to the membrane. In terms of biological role, ligand-specific transporter trafficking between intracellular organelles (TGN) and the plasma membrane. Plays a role in autocrine regulation of cell growth mediated by growth regulators containing cell surface retention sequence binding (CRS). May act as a hyaluronan (HA) transporter, either mediating its uptake for catabolism within lymphatic endothelial cells themselves, or its transport into the lumen of afferent lymphatic vessels for subsequent re-uptake and degradation in lymph nodes. Binds to pericelluar hyaluronan matrices deposited on the surface of leukocytes and facilitates cell adhesion and migration through lymphatic endothelium. This is Lymphatic vessel endothelial hyaluronic acid receptor 1 (Lyve1) from Mus musculus (Mouse).